A 497-amino-acid polypeptide reads, in one-letter code: Intermediate filament protein A (497 aa).

The interval 1-32 is coil 1A; that stretch reads MSDLNDRLASYIEKVRFLEAQNRKLAADLDLL. Residues 1–342 form the IF rod domain; it reads MSDLNDRLAS…KMLEGEENRA (342 aa). The segment at 33–46 is linker 1; it reads RGRWGKDTLSVRAM. The interval 47–184 is coil 1B; the sequence is YEGELQEARK…RVHDQEIAEL (138 aa). Positions 185 to 202 are linker 12; that stretch reads QAMASRDTTPENREYFKN. The coil 2 stretch occupies residues 203 to 342; the sequence is ELASAIRDIR…KMLEGEENRA (140 aa). Positions 343–497 are tail; that stretch reads GLRQLVEQVV…THIQRSSHTI (155 aa). Residues 375 to 493 enclose the LTD domain; that stretch reads SRTSFQRSAK…EERATHIQRS (119 aa).

This sequence belongs to the intermediate filament family. As to quaternary structure, a and B can form homopolymers. Giant body muscle cells.

The protein localises to the cytoplasm. In Ascaris suum (Pig roundworm), this protein is Intermediate filament protein A.